Reading from the N-terminus, the 155-residue chain is Interleukin-2 (155 aa).

An N-terminal signal peptide occupies residues 1 to 20 (MYKMQLVACIALSLVLITNS). O-linked (GalNAc...) threonine glycosylation is present at T23. Residues C77 and C125 are joined by a disulfide bond.

It belongs to the IL-2 family.

The protein resides in the secreted. In terms of biological role, cytokine produced by activated CD4-positive helper T-cells and to a lesser extend activated CD8-positive T-cells and natural killer (NK) cells that plays pivotal roles in the immune response and tolerance. Binds to a receptor complex composed of either the high-affinity trimeric IL-2R (IL2RA/CD25, IL2RB/CD122 and IL2RG/CD132) or the low-affinity dimeric IL-2R (IL2RB and IL2RG). Interaction with the receptor leads to oligomerization and conformation changes in the IL-2R subunits resulting in downstream signaling starting with phosphorylation of JAK1 and JAK3. In turn, JAK1 and JAK3 phosphorylate the receptor to form a docking site leading to the phosphorylation of several substrates including STAT5. This process leads to activation of several pathways including STAT, phosphoinositide-3-kinase/PI3K and mitogen-activated protein kinase/MAPK pathways. Functions as a T-cell growth factor and can increase NK-cell cytolytic activity as well. Promotes strong proliferation of activated B-cells and subsequently immunoglobulin production. Plays a pivotal role in regulating the adaptive immune system by controlling the survival and proliferation of regulatory T-cells, which are required for the maintenance of immune tolerance. Moreover, participates in the differentiation and homeostasis of effector T-cell subsets, including Th1, Th2, Th17 as well as memory CD8-positive T-cells. The protein is Interleukin-2 (IL2) of Dasypus novemcinctus (Nine-banded armadillo).